A 136-amino-acid chain; its full sequence is T-cell receptor alpha chain constant (136 aa).

Residues Ser-19 to Met-103 form the Ig-like C1-type domain. The cysteines at positions 22 and 72 are disulfide-linked. Asn-66, Asn-80, and Asn-109 each carry an N-linked (GlcNAc...) asparagine glycan. The interval Cys-90–Ser-111 is connecting peptide. A helical membrane pass occupies residues Ser-111–Leu-131. The Cytoplasmic portion of the chain corresponds to Arg-132–Ser-136.

In terms of assembly, alpha-beta TR is a heterodimer composed of an alpha and beta chain; disulfide-linked. The alpha-beta TR is associated with the transmembrane signaling CD3 coreceptor proteins to form the TR-CD3 (TcR or TCR). The assembly of alpha-beta TR heterodimers with CD3 occurs in the endoplasmic reticulum where a single alpha-beta TR heterodimer associates with one CD3D-CD3E heterodimer, one CD3G-CD3E heterodimer and one CD247 homodimer forming a stable octameric structure. CD3D-CD3E and CD3G-CD3E heterodimers preferentially associate with TR alpha and TR beta chains, respectively. The association of the CD247 homodimer is the last step of TcR assembly in the endoplasmic reticulum and is required for transport to the cell surface.

It is found in the cell membrane. In terms of biological role, constant region of T cell receptor (TR) alpha chain. Alpha-beta T cell receptors are antigen specific receptors which are essential to the immune response and are present on the cell surface of T lymphocytes. Recognize peptide-major histocompatibility (MH) (pMH) complexes that are displayed by antigen presenting cells (APC), a prerequisite for efficient T cell adaptive immunity against pathogens. Binding of alpha-beta TR to pMH complex initiates TR-CD3 clustering on the cell surface and intracellular activation of LCK that phosphorylates the ITAM motifs of CD3G, CD3D, CD3E and CD247 enabling the recruitment of ZAP70. In turn, ZAP70 phosphorylates LAT, which recruits numerous signaling molecules to form the LAT signalosome. The LAT signalosome propagates signal branching to three major signaling pathways, the calcium, the mitogen-activated protein kinase (MAPK) kinase and the nuclear factor NF-kappa-B (NF-kB) pathways, leading to the mobilization of transcription factors that are critical for gene expression and essential for T cell growth and differentiation. The T cell repertoire is generated in the thymus, by V-(D)-J rearrangement. This repertoire is then shaped by intrathymic selection events to generate a peripheral T cell pool of self-MH restricted, non-autoaggressive T cells. Post-thymic interaction of alpha-beta TR with the pMH complexes shapes TR structural and functional avidity. The polypeptide is T-cell receptor alpha chain constant (Mus musculus (Mouse)).